The following is a 210-amino-acid chain: Claudin-4 (210 aa).

Topologically, residues 1-7 (MASMGLQ) are cytoplasmic. The segment at 1-103 (MASMGLQVMG…GVLLSVVGGK (103 aa)) is interaction with EPHA2. The chain crosses the membrane as a helical span at residues 8–28 (VMGIALAVLGWLGAILSCALP). The Extracellular segment spans residues 29–81 (MWRVTAFIGSNIVTSQTIWEGLWMNCVVQSTGQMQCKVYDSLLALPQDLQAAR). A disulfide bridge connects residues Cys54 and Cys64. Residues 82–102 (ALMVVSIILAALGVLLSVVGG) traverse the membrane as a helical segment. Topologically, residues 103-117 (KCTNCVEDESAKAKT) are cytoplasmic. Residues 118-138 (MIVAGVVFLLAGLLVMVPASW) form a helical membrane-spanning segment. The Extracellular portion of the chain corresponds to 139 to 160 (TANNIIRDFYNPLVVSGQKREM). The chain crosses the membrane as a helical span at residues 161-181 (GASLYVGWAASGLLLLGGALL). Over 182–210 (CCNCPPRADKPYSAKYSAAARSAPASNYV) the chain is Cytoplasmic. Tyr209 carries the post-translational modification Phosphotyrosine. The interval 209 to 210 (YV) is interactions with TJP1, TJP2 and TJP3.

This sequence belongs to the claudin family. Can form heteropolymeric strands with other claudins. Interacts with CLDN8. Interacts with CLDN1. Directly interacts with TJP1/ZO-1. Interacts with TJP2/ZO-2 and TJP3/ZO-3. Interacts with EPHA2; phosphorylates CLDN4 and may regulate tight junctions. Post-translationally, phosphorylated. Phosphorylation by EPHA2 is stimulated by EFNA1 and alters interaction with TJP1.

Its subcellular location is the cell junction. The protein resides in the tight junction. It localises to the cell membrane. It carries out the reaction chloride(in) = chloride(out). It catalyses the reaction bromide(in) = bromide(out). The catalysed reaction is iodide(out) = iodide(in). The enzyme catalyses fluoride(in) = fluoride(out). In terms of biological role, can associate with other claudins to regulate tight junction structural and functional strand dynamics. May coassemble with CLDN8 into tight junction strands containing anion-selective channels that convey paracellular chloride permeability in renal collecting ducts. May integrate into CLDN3 strands to modulate localized tight junction barrier properties. May disrupt strand assembly of channel-forming CLDN2 and CLDN15 and inhibit cation conductance. Cannot form tight junction strands on its own. The sequence is that of Claudin-4 (CLDN4) from Canis lupus familiaris (Dog).